Here is a 64-residue protein sequence, read N- to C-terminus: MGQLGKIQRSTRQPIGLNGLFDPNNHSTRWWLRKHVHLRSLRNSDTSCKSRDKCSTFQSLQSYL.

This is an uncharacterized protein from Bdellovibrio phage phiMH2K (Bacteriophage phiMH2K).